The following is a 130-amino-acid chain: Phosphomevalonate dehydratase small subunit (130 aa).

Ser62 serves as the catalytic Proton acceptor.

The protein belongs to the AcnX type II small subunit family. As to quaternary structure, heterodimer composed of a large subunit (PMDh-L) and a small subunit (PMDh-S).

The enzyme catalyses (R)-5-phosphomevalonate = (2E)-3-methyl-5-phosphooxypent-2-enoate + H2O. The protein operates within isoprenoid biosynthesis; isopentenyl diphosphate biosynthesis via mevalonate pathway. Functionally, component of a hydro-lyase that catalyzes the dehydration of mevalonate 5-phosphate (MVA5P) to form trans-anhydromevalonate 5-phosphate (tAHMP). Involved in the archaeal mevalonate (MVA) pathway, which provides fundamental precursors for isoprenoid biosynthesis, such as isopentenyl diphosphate (IPP) and dimethylallyl diphosphate (DMAPP). The chain is Phosphomevalonate dehydratase small subunit from Thermococcus onnurineus (strain NA1).